We begin with the raw amino-acid sequence, 622 residues long: MLITRLRVPTIKRPLLPITSHLVRHCIRTYVATNHGNVRPFITPYKSSLPVRCLIAQRHIRTFPSNDKFTTKASNIETILLRKNNEREFKQSLLADAKNFQERFKINLKWILIKNNRPFSLNEISIIASWLILSQILWLILSTTTFISFYLFVINSVFSQEYIHEKKIYERLLKWLLKDHKCSNQDLEITFSPEDKASMLVLSPDWESNSILIKRLNVRDEILDLDLKFHHINLNVSLKNWLLGRGLITNVSIYGIRGCLNLSNFINLVNSFQGDQKTENFLKTLNNVEITDSEILLKQSLSAQETPSLKFSIYNLSLPRLRLNHFISDILSAKTFSGSINNSLFNLFKRQQKLTAVIENNNKNRMASSKFDFTDNNQENYRTVTHQDDPNYVTTLRLNFININDLKFNGNGKFNWLKDGQVEILADIMLTNSTSHLSSESKYAVVDLKVTCRDLKTTFPQEPPVLSTGDSIVSLDELKPIITFINSYEGMANPILKDFSENERLTNSIIWNSPNVSINRQRKSYPLTTKVTSNSTKEIIKFHNQPNTNANEIVLRCKMVKNLSDLQLININQILDQITMELYVDLTKIVEDWEFKNKNDWMKQWGTTFASQLLLFGFGAMV.

The transit peptide at methionine 1–threonine 70 directs the protein to the mitochondrion. The Mitochondrial matrix portion of the chain corresponds to threonine 71–glutamate 123. Residues isoleucine 124–threonine 144 form a helical membrane-spanning segment. The Mitochondrial intermembrane segment spans residues threonine 145 to tryptophan 601. A helical transmembrane segment spans residues methionine 602 to valine 622.

Belongs to the MDM31/MDM32 family. Interacts with MDM31. Participates in a complex of about 175 kDa.

Its subcellular location is the mitochondrion inner membrane. In terms of biological role, involved in the organization of the mitochondrial membranes and the global structure of the mitochondria. Also required for mitochondrial distribution and mobility as well as for the maintenance of mitochondrial DNA nucleoids structures. The protein is Mitochondrial distribution and morphology protein 32 (MDM32) of Saccharomyces cerevisiae (strain YJM789) (Baker's yeast).